Here is a 237-residue protein sequence, read N- to C-terminus: Phosphoribosylaminoimidazole-succinocarboxamide synthase (237 aa).

This sequence belongs to the SAICAR synthetase family.

The enzyme catalyses 5-amino-1-(5-phospho-D-ribosyl)imidazole-4-carboxylate + L-aspartate + ATP = (2S)-2-[5-amino-1-(5-phospho-beta-D-ribosyl)imidazole-4-carboxamido]succinate + ADP + phosphate + 2 H(+). It participates in purine metabolism; IMP biosynthesis via de novo pathway; 5-amino-1-(5-phospho-D-ribosyl)imidazole-4-carboxamide from 5-amino-1-(5-phospho-D-ribosyl)imidazole-4-carboxylate: step 1/2. This Campylobacter fetus subsp. fetus (strain 82-40) protein is Phosphoribosylaminoimidazole-succinocarboxamide synthase.